A 308-amino-acid polypeptide reads, in one-letter code: Transaldolase (308 aa).

Residue lysine 125 is the Schiff-base intermediate with substrate of the active site.

This sequence belongs to the transaldolase family. Type 1 subfamily. Homodimer.

Its subcellular location is the cytoplasm. It carries out the reaction D-sedoheptulose 7-phosphate + D-glyceraldehyde 3-phosphate = D-erythrose 4-phosphate + beta-D-fructose 6-phosphate. Its pathway is carbohydrate degradation; pentose phosphate pathway; D-glyceraldehyde 3-phosphate and beta-D-fructose 6-phosphate from D-ribose 5-phosphate and D-xylulose 5-phosphate (non-oxidative stage): step 2/3. Its function is as follows. Transaldolase is important for the balance of metabolites in the pentose-phosphate pathway. This Pseudomonas fluorescens (strain Pf0-1) protein is Transaldolase.